Here is a 934-residue protein sequence, read N- to C-terminus: MSAHDLKLEEIVNAETLRRKLNELADTADESYTSLPMRKVVLQTLKDALASGRANAEDMLMKDGGGTLCAKRLCYLMDTLIDILFEFATTRAYPTRNPSKAENMALVAVGGYGRGGLAQGSDIDLLFLLPYKQTPWGEQVVEHTLYMLWDMGLKVGHSTRNIDECIRLAREDMTIRTALLDARFLTGDKDLFRTLEIRFEEEIVKGTEPEFIQAKLAERDARHRKAGETRYLVEPNVKEGKGGQRDLHTLFWITKYFYRVKTKEELVKLGVLSRAELKLFNKAEDFLWAVRCHMHFATLKAEERLSFDIQPEIAQRLGYTAHPGQNYVERFMKHYFLVAKDVGDLTRIICAALEEQQAKHVPGFNRIFLTFSRRKRKLSDDGAFISENHRINIARPDIFRQDPVNMIRLFHLADRHGLEFHPEAMQSLTRSLKLINADLRENPEANRLFLEILTSPRNPELILRRMNESGVLGKFIPDFGKIVAMMQFNMYHHYTVDEHLLRCIAVLSEIEHGELKTEHPLSNHLITTIKRDRNLLYVTLLLHDIAKGRPEDHSIAGARIARRLCPRFGLTPSETETVEWLVREHLTMSMVAQSRDLNDRKTIIDFADTVQTMERLKLLLILTVCDIKAVGPGIWNGWKGQLLRTLFYETELVLTGGFSELSRAARDKQAREALAERLSDWPKEERDAYLALPYTNYFLTVSLDDQVRHAHFIRDADQQGRALVTMAKPHAFEAVTEITVLAPDHPRLLSVITGACAAAGGNIVDAQIFTTSDGRALDTILISREFDTDDDERRRAERVGKVIEDVLSGKAHLPDMLAKRTKPKKAARAFKVEPRVEINNTLSNKFTVIEVEGLDRPGLLSELTGLISDLSLDIASAHITTFGEKVIDSFYVTDLVGHKISNATRQGNIKRKLLALLGAENGARTNGRSPQAAA.

Residues 1-379 are uridylyltransferase; the sequence is MSAHDLKLEE…TFSRRKRKLS (379 aa). Positions 380-736 are uridylyl-removing; the sequence is DDGAFISENH…AKPHAFEAVT (357 aa). Residues 496–613 enclose the HD domain; it reads VDEHLLRCIA…IDFADTVQTM (118 aa). ACT domains are found at residues 737-818 and 848-931; these read EITV…DMLA and VIEV…RSPQ.

Belongs to the GlnD family. The cofactor is Mg(2+).

It carries out the reaction [protein-PII]-L-tyrosine + UTP = [protein-PII]-uridylyl-L-tyrosine + diphosphate. The enzyme catalyses [protein-PII]-uridylyl-L-tyrosine + H2O = [protein-PII]-L-tyrosine + UMP + H(+). Its activity is regulated as follows. Uridylyltransferase (UTase) activity is inhibited by glutamine, while glutamine activates uridylyl-removing (UR) activity. Modifies, by uridylylation and deuridylylation, the PII regulatory proteins (GlnB and homologs), in response to the nitrogen status of the cell that GlnD senses through the glutamine level. Under low glutamine levels, catalyzes the conversion of the PII proteins and UTP to PII-UMP and PPi, while under higher glutamine levels, GlnD hydrolyzes PII-UMP to PII and UMP (deuridylylation). Thus, controls uridylylation state and activity of the PII proteins, and plays an important role in the regulation of nitrogen assimilation and metabolism. This Brucella melitensis biotype 2 (strain ATCC 23457) protein is Bifunctional uridylyltransferase/uridylyl-removing enzyme.